The chain runs to 468 residues: Chromosomal replication initiator protein DnaA (468 aa).

A domain I, interacts with DnaA modulators region spans residues 1 to 84 (MSSSLWLQCL…RFEVGSRRVA (84 aa)). The tract at residues 84–131 (AAPKPAPTRTPADVAAESSAPAQLQARKPVHKTWDDDAQVIADINHRS) is domain II. The segment covering 85–95 (APKPAPTRTPA) has biased composition (low complexity). Positions 85-104 (APKPAPTRTPADVAAESSAP) are disordered. Residues 132-348 (NVNPKHKFNN…GALNRVIANA (217 aa)) form a domain III, AAA+ region region. ATP contacts are provided by G176, G178, K179, and T180. Residues 349–468 (NFTGRPITID…YSNLIRTLSS (120 aa)) form a domain IV, binds dsDNA region.

The protein belongs to the DnaA family. Oligomerizes as a right-handed, spiral filament on DNA at oriC.

Its subcellular location is the cytoplasm. Plays an essential role in the initiation and regulation of chromosomal replication. ATP-DnaA binds to the origin of replication (oriC) to initiate formation of the DNA replication initiation complex once per cell cycle. Binds the DnaA box (a 9 base pair repeat at the origin) and separates the double-stranded (ds)DNA. Forms a right-handed helical filament on oriC DNA; dsDNA binds to the exterior of the filament while single-stranded (ss)DNA is stabiized in the filament's interior. The ATP-DnaA-oriC complex binds and stabilizes one strand of the AT-rich DNA unwinding element (DUE), permitting loading of DNA polymerase. After initiation quickly degrades to an ADP-DnaA complex that is not apt for DNA replication. Binds acidic phospholipids. Its function is as follows. Complements a temperature-sensitive E.coli mutant, the DnaA consensus is 5'-TT(A/T)TNCACA-3'. In Vibrio harveyi (Beneckea harveyi), this protein is Chromosomal replication initiator protein DnaA.